The primary structure comprises 338 residues: Serpentine receptor class alpha-32 (338 aa).

7 helical membrane-spanning segments follow: residues 30 to 50 (VYVI…IHAI), 63 to 83 (ITHL…SYTI), 120 to 140 (RFLF…VILF), 152 to 172 (GEIL…LLHL), 199 to 219 (LTSY…MMWY), 249 to 269 (LNSL…FVLA), and 289 to 309 (TTPY…QWIG).

The protein belongs to the nematode receptor-like protein sra family.

The protein resides in the membrane. This is Serpentine receptor class alpha-32 (sra-32) from Caenorhabditis elegans.